The primary structure comprises 311 residues: Putative S-adenosyl-L-methionine-dependent methyltransferase MRA_0152 (311 aa).

S-adenosyl-L-methionine contacts are provided by residues D135 and 164–165 (DL).

The protein belongs to the UPF0677 family.

Functionally, exhibits S-adenosyl-L-methionine-dependent methyltransferase activity. The polypeptide is Putative S-adenosyl-L-methionine-dependent methyltransferase MRA_0152 (Mycobacterium tuberculosis (strain ATCC 25177 / H37Ra)).